The chain runs to 245 residues: PF03932 family protein CutC (245 aa).

Belongs to the CutC family.

The protein resides in the cytoplasm. The sequence is that of PF03932 family protein CutC from Caulobacter vibrioides (strain ATCC 19089 / CIP 103742 / CB 15) (Caulobacter crescentus).